The following is a 311-amino-acid chain: MTGKMKLFSVTSERPLATKIADYLDIPLCEVELQKFSDGEVKINIEESIRGTNAYVVQSMNANVNERLMELLIMVDALKRASVHSINIIMPYYGYARQDRKARSREPITAKLMANLIQRAGANRLITVDLHAAQIQGFFNIPIDHLSAVPLIGDYLIEKYGEEDVVVVAPDHSGVVRARRIADRLNAPIAILNRKPRPHEDEIMSVIGDVKGKVAIVVDDIIDTGVRATTSADILLEKGAVEVIACATHSVMAGDATERLQNSRIKEVITSDSIDLPEEKQFEKLTTISIGRILGRAIEGVQENRSLHPLF.

ATP is bound by residues 38 to 40 (DGE) and 97 to 98 (RQ). Mg(2+) contacts are provided by His131 and Asp171. Asp219 provides a ligand contact to D-ribose 5-phosphate.

It belongs to the ribose-phosphate pyrophosphokinase family. Class I subfamily. In terms of assembly, homohexamer. Mg(2+) serves as cofactor.

It localises to the cytoplasm. The catalysed reaction is D-ribose 5-phosphate + ATP = 5-phospho-alpha-D-ribose 1-diphosphate + AMP + H(+). It functions in the pathway metabolic intermediate biosynthesis; 5-phospho-alpha-D-ribose 1-diphosphate biosynthesis; 5-phospho-alpha-D-ribose 1-diphosphate from D-ribose 5-phosphate (route I): step 1/1. Involved in the biosynthesis of the central metabolite phospho-alpha-D-ribosyl-1-pyrophosphate (PRPP) via the transfer of pyrophosphoryl group from ATP to 1-hydroxyl of ribose-5-phosphate (Rib-5-P). The protein is Putative ribose-phosphate pyrophosphokinase 2 of Listeria innocua serovar 6a (strain ATCC BAA-680 / CLIP 11262).